The primary structure comprises 462 residues: uncharacterized protein (462 aa).

2 consecutive transmembrane segments (helical) span residues 12-32 (WWWL…APTV) and 257-277 (GLCV…LELV).

Belongs to the HHV-5 US29 protein family.

Its subcellular location is the host membrane. This is an uncharacterized protein from Homo sapiens (Human).